The chain runs to 95 residues: MLKFNEYFTGKVKSIGFDSDSIGPASVGVMEKGEYTFSTAKAEEMTVITGSLKVLIPGSPDWQTFMPGETFYIPGESEFNLQVAEASSYLCKYLS.

Belongs to the nucleoside phosphorylase PpnP family.

It catalyses the reaction a purine D-ribonucleoside + phosphate = a purine nucleobase + alpha-D-ribose 1-phosphate. It carries out the reaction adenosine + phosphate = alpha-D-ribose 1-phosphate + adenine. The catalysed reaction is cytidine + phosphate = cytosine + alpha-D-ribose 1-phosphate. The enzyme catalyses guanosine + phosphate = alpha-D-ribose 1-phosphate + guanine. It catalyses the reaction inosine + phosphate = alpha-D-ribose 1-phosphate + hypoxanthine. It carries out the reaction thymidine + phosphate = 2-deoxy-alpha-D-ribose 1-phosphate + thymine. The catalysed reaction is uridine + phosphate = alpha-D-ribose 1-phosphate + uracil. The enzyme catalyses xanthosine + phosphate = alpha-D-ribose 1-phosphate + xanthine. Functionally, catalyzes the phosphorolysis of diverse nucleosides, yielding D-ribose 1-phosphate and the respective free bases. Can use uridine, adenosine, guanosine, cytidine, thymidine, inosine and xanthosine as substrates. Also catalyzes the reverse reactions. In Yersinia pestis bv. Antiqua (strain Antiqua), this protein is Pyrimidine/purine nucleoside phosphorylase.